The sequence spans 212 residues: Methylthioribulose-1-phosphate dehydratase (212 aa).

2 residues coordinate Zn(2+): His-97 and His-99.

Belongs to the aldolase class II family. MtnB subfamily. As to quaternary structure, homotetramer. It depends on Zn(2+) as a cofactor.

The catalysed reaction is 5-(methylsulfanyl)-D-ribulose 1-phosphate = 5-methylsulfanyl-2,3-dioxopentyl phosphate + H2O. It functions in the pathway amino-acid biosynthesis; L-methionine biosynthesis via salvage pathway; L-methionine from S-methyl-5-thio-alpha-D-ribose 1-phosphate: step 2/6. Catalyzes the dehydration of methylthioribulose-1-phosphate (MTRu-1-P) into 2,3-diketo-5-methylthiopentyl-1-phosphate (DK-MTP-1-P). This is Methylthioribulose-1-phosphate dehydratase from Bacillus cereus (strain AH187).